The primary structure comprises 537 residues: Apoptosis inhibitor 5-like protein API5 (537 aa).

The segment at 9-363 is ARM-like and Heat-like helical repeats; that stretch reads AEVERLYELG…TTNSLCGYKI (355 aa). A disordered region spans residues 465–537; sequence WMEQPKKPAP…GGRGRGWGYR (73 aa). Positions 474 to 492 are enriched in polar residues; it reads PTTTGGKRSQPATNGNTPA.

This sequence belongs to the API5 family. In terms of assembly, interacts with AIP1 and AIP2.

Its subcellular location is the nucleus. In terms of biological role, putative anti-apoptotic factor involved in the regulation of tapetal programmed cell death (PCD) and degeneration during anther development. Interacts directly with the DEAD-box ATP-dependent RNA helicases AIP1 and AIP2 that form dimers and bind the promoter region of the cysteine protease CP1 involved in tapetum PCD. This chain is Apoptosis inhibitor 5-like protein API5, found in Oryza sativa subsp. japonica (Rice).